Consider the following 238-residue polypeptide: UDP-2,3-diacylglucosamine hydrolase (238 aa).

Mn(2+) contacts are provided by D8, H10, D41, N78, and H113. 78–79 (NR) is a binding site for substrate. Residues D121, S159, N163, K166, and H194 each coordinate substrate. Residues H194 and H196 each coordinate Mn(2+).

Belongs to the LpxH family. Mn(2+) is required as a cofactor.

Its subcellular location is the cell inner membrane. The catalysed reaction is UDP-2-N,3-O-bis[(3R)-3-hydroxytetradecanoyl]-alpha-D-glucosamine + H2O = 2-N,3-O-bis[(3R)-3-hydroxytetradecanoyl]-alpha-D-glucosaminyl 1-phosphate + UMP + 2 H(+). It functions in the pathway glycolipid biosynthesis; lipid IV(A) biosynthesis; lipid IV(A) from (3R)-3-hydroxytetradecanoyl-[acyl-carrier-protein] and UDP-N-acetyl-alpha-D-glucosamine: step 4/6. Hydrolyzes the pyrophosphate bond of UDP-2,3-diacylglucosamine to yield 2,3-diacylglucosamine 1-phosphate (lipid X) and UMP by catalyzing the attack of water at the alpha-P atom. Involved in the biosynthesis of lipid A, a phosphorylated glycolipid that anchors the lipopolysaccharide to the outer membrane of the cell. The protein is UDP-2,3-diacylglucosamine hydrolase of Shewanella pealeana (strain ATCC 700345 / ANG-SQ1).